Here is a 707-residue protein sequence, read N- to C-terminus: Ferric reduction oxidase 5 (707 aa).

At 1 to 9 (MGNMRSLVK) the chain is on the cytoplasmic side. A helical membrane pass occupies residues 10 to 29 (MLMVVLFLGWIFVWIMISTN). Over 30-54 (RFQNIWTPKLAKYLKTTYFGPQGMN) the chain is Extracellular. A helical transmembrane segment spans residues 55–73 (LVLLTVPMMFIAVLSCVYL). At 74–106 (HTQKQPSQTQSLYKCREWKVKGRMGRVMMVMNP) the chain is on the cytoplasmic side. Residues 107 to 130 (LGIVTATELTFSLLFLALLVWALS) form a helical membrane-spanning segment. The Extracellular segment spans residues 131–198 (NYLYLSYHVH…VGLTSESSIK (68 aa)). Residues 165–284 (GYVGHYCWAF…HLYGLYIVFY (120 aa)) form the Ferric oxidoreductase domain. A helical membrane pass occupies residues 199–222 (YHIWLGHVSNFCFLVHTVVFLIYW). Heme contacts are provided by H200 and H214. Topologically, residues 223-272 (AMVNKLMETFAWNATYVPNLAGTIAMVIGIAIWVTSLPSFRRKKFEIFFY) are cytoplasmic. Residues 273–297 (THHLYGLYIVFYAIHVGDSWFCMIL) form a helical membrane-spanning segment. Residues H274 and H287 each contribute to the heme site. Residues 298–319 (PNIFLFFIDRYLRFLQSTKRSR) are Extracellular-facing. The 104-residue stretch at 313 to 416 (QSTKRSRLVS…EGPYGPNSFD (104 aa)) folds into the FAD-binding FR-type domain. A helical transmembrane segment spans residues 320 to 340 (LVSAKILPSDNLELTFAKTSG). Topologically, residues 341–533 (LHYTPTSILF…PISPVLGPNN (193 aa)) are cytoplasmic. Position 362 to 365 (362 to 365 (HPFT)) interacts with FAD. 408-411 (GPYG) is an NAD(+) binding site. The helical transmembrane segment at 534–556 (FLWLGVVILSSFVMFLLLIGIVT) threads the bilayer. Over 557 to 576 (RYYIYPVDHNTGSIYNFTYR) the chain is Extracellular. A helical membrane pass occupies residues 577–598 (VLWVMFLGCVCIFISSSIIFLW). The Cytoplasmic portion of the chain corresponds to 599–707 (RKKENKEGDK…LHFEAISFNW (109 aa)). The disordered stretch occupies residues 608–630 (KDSKKQVQSVEFQTPTSSPGSWF). The span at 613-627 (QVQSVEFQTPTSSPG) shows a compositional bias: polar residues.

Belongs to the ferric reductase (FRE) family. Requires FAD as cofactor. Expressed at low levels in roots, shoots, pedicels and inflorescence stems, flowers, sepals, stigmas and anther filaments.

It localises to the cell membrane. The catalysed reaction is 2 a Fe(II)-siderophore + NAD(+) + H(+) = 2 a Fe(III)-siderophore + NADH. Ferric chelate reductase probably involved in iron reduction in shoots. May participate in the transport of electrons to a Fe(3+) ion via FAD and heme intermediates. May act in iron metabolism in reproductive organs. May function as root surface cupric chelate reductase and participate in the reduction of Cu(2+), for Cu(+) acquisition via Cu(+) transporters in response to copper deficiency. This chain is Ferric reduction oxidase 5 (FRO5), found in Arabidopsis thaliana (Mouse-ear cress).